The following is a 525-amino-acid chain: GMP synthase [glutamine-hydrolyzing] (525 aa).

One can recognise a Glutamine amidotransferase type-1 domain in the interval 9 to 202; sequence SILIIDFGSQ…VHKIVGLKSD (194 aa). Cysteine 86 serves as the catalytic Nucleophile. Active-site residues include histidine 176 and glutamate 178. A GMPS ATP-PPase domain is found at 203–400; that stretch reads WTMAAYRAEM…LGLPESFIGR (198 aa). An ATP-binding site is contributed by 230–236; it reads SGGVDSS.

Homodimer.

The enzyme catalyses XMP + L-glutamine + ATP + H2O = GMP + L-glutamate + AMP + diphosphate + 2 H(+). It participates in purine metabolism; GMP biosynthesis; GMP from XMP (L-Gln route): step 1/1. Its function is as follows. Catalyzes the synthesis of GMP from XMP. This chain is GMP synthase [glutamine-hydrolyzing], found in Agrobacterium fabrum (strain C58 / ATCC 33970) (Agrobacterium tumefaciens (strain C58)).